The chain runs to 320 residues: Cytochrome f (320 aa).

The N-terminal stretch at 1 to 35 is a signal peptide; the sequence is MQTRNAFSWLKKQITRSISVSLMIYILTRTSISSA. Residues Tyr36, Cys56, Cys59, and His60 each contribute to the heme site. A helical membrane pass occupies residues 286–306; that stretch reads AQGLLFFLASVILAQIFLVLK.

Belongs to the cytochrome f family. As to quaternary structure, the 4 large subunits of the cytochrome b6-f complex are cytochrome b6, subunit IV (17 kDa polypeptide, petD), cytochrome f and the Rieske protein, while the 4 small subunits are PetG, PetL, PetM and PetN. The complex functions as a dimer. Heme is required as a cofactor.

Its subcellular location is the plastid. It is found in the chloroplast thylakoid membrane. Component of the cytochrome b6-f complex, which mediates electron transfer between photosystem II (PSII) and photosystem I (PSI), cyclic electron flow around PSI, and state transitions. The polypeptide is Cytochrome f (Nicotiana tomentosiformis (Tobacco)).